The sequence spans 147 residues: Hemoglobin subunit epsilon (147 aa).

Positions 3–147 constitute a Globin domain; that stretch reads HFTAEEKSTI…VATALAHKYH (145 aa). Residues Ser14 and Ser51 each carry the phosphoserine modification. Heme b is bound by residues His64 and His93.

Belongs to the globin family. In terms of assembly, heterotetramer of two alpha chains and two epsilon chains in early embryonic hemoglobin Gower-2; two zeta chains and two epsilon chains in early embryonic hemoglobin Gower-1. Red blood cells.

The epsilon chain is a beta-type chain of early mammalian embryonic hemoglobin. In Eulemur fulvus fulvus (Brown lemur), this protein is Hemoglobin subunit epsilon (HBE1).